Consider the following 274-residue polypeptide: Hydroxyethylthiazole kinase (274 aa).

Substrate is bound at residue Met46. ATP-binding residues include Arg122 and Thr173. Residue Gly200 participates in substrate binding.

Belongs to the Thz kinase family. Requires Mg(2+) as cofactor.

It carries out the reaction 5-(2-hydroxyethyl)-4-methylthiazole + ATP = 4-methyl-5-(2-phosphooxyethyl)-thiazole + ADP + H(+). It participates in cofactor biosynthesis; thiamine diphosphate biosynthesis; 4-methyl-5-(2-phosphoethyl)-thiazole from 5-(2-hydroxyethyl)-4-methylthiazole: step 1/1. Its function is as follows. Catalyzes the phosphorylation of the hydroxyl group of 4-methyl-5-beta-hydroxyethylthiazole (THZ). This is Hydroxyethylthiazole kinase from Clostridium tetani (strain Massachusetts / E88).